The following is an 860-amino-acid chain: Leucine--tRNA ligase (860 aa).

Positions 42–52 (PYPSGRLHMGH) match the 'HIGH' region motif. A 'KMSKS' region motif is present at residues 619 to 623 (KMSKS). ATP is bound at residue Lys-622.

The protein belongs to the class-I aminoacyl-tRNA synthetase family.

It is found in the cytoplasm. It catalyses the reaction tRNA(Leu) + L-leucine + ATP = L-leucyl-tRNA(Leu) + AMP + diphosphate. The chain is Leucine--tRNA ligase from Actinobacillus succinogenes (strain ATCC 55618 / DSM 22257 / CCUG 43843 / 130Z).